A 451-amino-acid polypeptide reads, in one-letter code: Bifunctional protein GlmU (451 aa).

The pyrophosphorylase stretch occupies residues 1 to 229; it reads MQRHAIILAA…FDEIIGVNDR (229 aa). UDP-N-acetyl-alpha-D-glucosamine is bound by residues 8 to 11, lysine 22, glutamine 72, and 77 to 78; these read LAAG and GT. Aspartate 102 is a binding site for Mg(2+). Residues glycine 139, glutamate 154, and asparagine 227 each coordinate UDP-N-acetyl-alpha-D-glucosamine. Asparagine 227 lines the Mg(2+) pocket. Residues 230–250 form a linker region; the sequence is LMLSEAEKALQQRINRYHMEN. Residues 251–451 are N-acetyltransferase; that stretch reads GVTIIDPSST…QVNKEGYLKK (201 aa). Arginine 332 and lysine 350 together coordinate UDP-N-acetyl-alpha-D-glucosamine. Histidine 362 (proton acceptor) is an active-site residue. UDP-N-acetyl-alpha-D-glucosamine contacts are provided by tyrosine 365 and asparagine 376. Acetyl-CoA-binding positions include 385 to 386, alanine 422, and arginine 439; that span reads NY.

This sequence in the N-terminal section; belongs to the N-acetylglucosamine-1-phosphate uridyltransferase family. The protein in the C-terminal section; belongs to the transferase hexapeptide repeat family. As to quaternary structure, homotrimer. It depends on Mg(2+) as a cofactor.

Its subcellular location is the cytoplasm. The catalysed reaction is alpha-D-glucosamine 1-phosphate + acetyl-CoA = N-acetyl-alpha-D-glucosamine 1-phosphate + CoA + H(+). It catalyses the reaction N-acetyl-alpha-D-glucosamine 1-phosphate + UTP + H(+) = UDP-N-acetyl-alpha-D-glucosamine + diphosphate. The protein operates within nucleotide-sugar biosynthesis; UDP-N-acetyl-alpha-D-glucosamine biosynthesis; N-acetyl-alpha-D-glucosamine 1-phosphate from alpha-D-glucosamine 6-phosphate (route II): step 2/2. Its pathway is nucleotide-sugar biosynthesis; UDP-N-acetyl-alpha-D-glucosamine biosynthesis; UDP-N-acetyl-alpha-D-glucosamine from N-acetyl-alpha-D-glucosamine 1-phosphate: step 1/1. It participates in bacterial outer membrane biogenesis; LPS lipid A biosynthesis. Its function is as follows. Catalyzes the last two sequential reactions in the de novo biosynthetic pathway for UDP-N-acetylglucosamine (UDP-GlcNAc). The C-terminal domain catalyzes the transfer of acetyl group from acetyl coenzyme A to glucosamine-1-phosphate (GlcN-1-P) to produce N-acetylglucosamine-1-phosphate (GlcNAc-1-P), which is converted into UDP-GlcNAc by the transfer of uridine 5-monophosphate (from uridine 5-triphosphate), a reaction catalyzed by the N-terminal domain. The protein is Bifunctional protein GlmU of Staphylococcus epidermidis (strain ATCC 35984 / DSM 28319 / BCRC 17069 / CCUG 31568 / BM 3577 / RP62A).